The chain runs to 135 residues: NAD(P)H-quinone oxidoreductase subunit 3 (135 aa).

The next 3 membrane-spanning stretches (helical) occupy residues 15 to 35 (LMFV…AAAV), 79 to 99 (MFAL…PWAV), and 104 to 124 (LGLL…VALA).

The protein belongs to the complex I subunit 3 family. As to quaternary structure, NDH-1 can be composed of about 15 different subunits; different subcomplexes with different compositions have been identified which probably have different functions.

It is found in the cellular thylakoid membrane. The enzyme catalyses a plastoquinone + NADH + (n+1) H(+)(in) = a plastoquinol + NAD(+) + n H(+)(out). It catalyses the reaction a plastoquinone + NADPH + (n+1) H(+)(in) = a plastoquinol + NADP(+) + n H(+)(out). In terms of biological role, NDH-1 shuttles electrons from an unknown electron donor, via FMN and iron-sulfur (Fe-S) centers, to quinones in the respiratory and/or the photosynthetic chain. The immediate electron acceptor for the enzyme in this species is believed to be plastoquinone. Couples the redox reaction to proton translocation, and thus conserves the redox energy in a proton gradient. Cyanobacterial NDH-1 also plays a role in inorganic carbon-concentration. In Synechococcus sp. (strain CC9311), this protein is NAD(P)H-quinone oxidoreductase subunit 3.